Consider the following 361-residue polypeptide: Probable purine permease 13 (361 aa).

The next 10 helical transmembrane spans lie at 35 to 55 (WILV…AVLL), 68 to 88 (WIST…LCFL), 103 to 123 (LVWI…LYSF), 129 to 151 (SAST…SYYI), 156 to 176 (ITCL…LVSL), 192 to 212 (LIGC…LSLM), 238 to 258 (VASC…LLSV), 268 to 288 (VIYV…SVGA), 289 to 309 (VALI…LSLI), and 323 to 343 (LTEV…FYIY).

This sequence belongs to the purine permeases (TC 2.A.7.14) family.

It localises to the membrane. The sequence is that of Probable purine permease 13 (PUP13) from Arabidopsis thaliana (Mouse-ear cress).